Here is a 117-residue protein sequence, read N- to C-terminus: Cliotide T9 (117 aa).

The N-terminal stretch at 1 to 25 (MAYVRLACLAVIFFFAASVMFTVEA) is a signal peptide. Residues 26-55 (GIPCGESCVFIPCLTTVVGCSCKNKVCYNN) constitute a cross-link (cyclopeptide (Gly-Asn)). 3 cysteine pairs are disulfide-bonded: cysteine 29/cysteine 45, cysteine 33/cysteine 47, and cysteine 38/cysteine 52. A propeptide spans 56–117 (HVIAAEANSI…YLLKDFLKMP (62 aa)) (removed in mature form).

Post-translationally, contains 3 disulfide bonds. This is a cyclic peptide. In terms of tissue distribution, expressed in seed but not in root, nodule, flower, stem, shoot, leaf and pod (at protein level).

In terms of biological role, probably participates in a plant defense mechanism. In Clitoria ternatea (Butterfly pea), this protein is Cliotide T9.